We begin with the raw amino-acid sequence, 272 residues long: Tryptophan synthase alpha chain (272 aa).

Active-site proton acceptor residues include Glu49 and Asp60.

This sequence belongs to the TrpA family. In terms of assembly, tetramer of two alpha and two beta chains.

It catalyses the reaction (1S,2R)-1-C-(indol-3-yl)glycerol 3-phosphate + L-serine = D-glyceraldehyde 3-phosphate + L-tryptophan + H2O. Its pathway is amino-acid biosynthesis; L-tryptophan biosynthesis; L-tryptophan from chorismate: step 5/5. The alpha subunit is responsible for the aldol cleavage of indoleglycerol phosphate to indole and glyceraldehyde 3-phosphate. This is Tryptophan synthase alpha chain from Polaromonas naphthalenivorans (strain CJ2).